We begin with the raw amino-acid sequence, 348 residues long: N-formyl peptide receptor 2 (348 aa).

N-linked (GlcNAc...) asparagine glycosylation occurs at Asn1. The Extracellular portion of the chain corresponds to 1-24 (NFSTPLNEHEEVSYESAGYTVLQI). The chain crosses the membrane as a helical span at residues 25-47 (LPLVVLGVTFVLGVLGNGLVIWV). Topologically, residues 48-58 (AGFRMTRTVTT) are cytoplasmic. The chain crosses the membrane as a helical span at residues 59-80 (ICYLNLPLADFSFTATLPFLIV). Over 81–97 (SMAMGEKWPFGWFLCKL) the chain is Extracellular. A disulfide bridge links Cys95 with Cys173. Residues 98–118 (IHIVVDINLFGSVFLIGFIAL) form a helical membrane-spanning segment. Over 119–137 (DRCICVLHPVWAQNHRTVS) the chain is Cytoplasmic. A helical transmembrane segment spans residues 138–159 (LAMKVIIGPWILALVLTLPVFL). Topologically, residues 160-202 (FLTTVTIPNGDTYCTFNFASWGGTPEERKNVAITMLTARGIIR) are extracellular. Residues 203–223 (FVIGFSMPMSIVAICYGLIAA) form a helical membrane-spanning segment. Topologically, residues 224–239 (KIHKKGMIKSSRPLRV) are cytoplasmic. Residues 240-263 (LTAVVASFFICWFPFQLVALLSTV) traverse the membrane as a helical segment. Over 264-283 (WLKEMLFYGKYKIINILVNP) the chain is Extracellular. The helical transmembrane segment at 284 to 303 (TSSLAFFNSCLNPMLYVFVG) threads the bilayer. Topologically, residues 304 to 348 (QDFRERLIRSLPTSLERALSEDSAPTNDTAAKCASPPAETELQAM) are cytoplasmic. The disordered stretch occupies residues 323–348 (SEDSAPTNDTAAKCASPPAETELQAM).

This sequence belongs to the G-protein coupled receptor 1 family. Interacts with APP; the interaction takes place at the cell surface and the complex is then rapidly internalized.

It is found in the cell membrane. Its function is as follows. Low affinity receptor for N-formyl-methionyl peptides, which are powerful neutrophil chemotactic factors. Binding of FMLP to the receptor causes activation of neutrophils. This response is mediated via a G-protein that activates a phosphatidylinositol-calcium second messenger system. Receptor for the chemokine-like protein FAM19A5, mediating FAM19A5-stimulated macrophage chemotaxis and the inhibitory effect on TNFSF11/RANKL-induced osteoclast differentiation. In Pongo pygmaeus (Bornean orangutan), this protein is N-formyl peptide receptor 2 (FPR2).